The chain runs to 247 residues: 2,3-bisphosphoglycerate-dependent phosphoglycerate mutase (247 aa).

Substrate is bound by residues 8 to 15 (RHGESTWN), 21 to 22 (TG), Arg-60, 87 to 90 (ERHY), Lys-98, 114 to 115 (RR), and 183 to 184 (GN). Residue His-9 is the Tele-phosphohistidine intermediate of the active site. The Proton donor/acceptor role is filled by Glu-87.

This sequence belongs to the phosphoglycerate mutase family. BPG-dependent PGAM subfamily. As to quaternary structure, homodimer.

It catalyses the reaction (2R)-2-phosphoglycerate = (2R)-3-phosphoglycerate. Its pathway is carbohydrate degradation; glycolysis; pyruvate from D-glyceraldehyde 3-phosphate: step 3/5. Functionally, catalyzes the interconversion of 2-phosphoglycerate and 3-phosphoglycerate. In Delftia acidovorans (strain DSM 14801 / SPH-1), this protein is 2,3-bisphosphoglycerate-dependent phosphoglycerate mutase.